We begin with the raw amino-acid sequence, 273 residues long: 3-methyl-2-oxobutanoate hydroxymethyltransferase (273 aa).

The Mg(2+) site is built by Asp-49 and Asp-88. 3-methyl-2-oxobutanoate contacts are provided by residues Asp-49 to Ser-50, Asp-88, and Lys-118. Position 120 (Glu-120) interacts with Mg(2+). Glu-187 (proton acceptor) is an active-site residue.

The protein belongs to the PanB family. As to quaternary structure, homodecamer; pentamer of dimers. Mg(2+) is required as a cofactor.

It localises to the cytoplasm. It catalyses the reaction 3-methyl-2-oxobutanoate + (6R)-5,10-methylene-5,6,7,8-tetrahydrofolate + H2O = 2-dehydropantoate + (6S)-5,6,7,8-tetrahydrofolate. Its pathway is cofactor biosynthesis; (R)-pantothenate biosynthesis; (R)-pantoate from 3-methyl-2-oxobutanoate: step 1/2. Functionally, catalyzes the reversible reaction in which hydroxymethyl group from 5,10-methylenetetrahydrofolate is transferred onto alpha-ketoisovalerate to form ketopantoate. This chain is 3-methyl-2-oxobutanoate hydroxymethyltransferase, found in Sinorhizobium medicae (strain WSM419) (Ensifer medicae).